We begin with the raw amino-acid sequence, 380 residues long: DNA replication and repair protein RecF (380 aa).

Glycine 30 to threonine 37 is an ATP binding site.

This sequence belongs to the RecF family.

It is found in the cytoplasm. Its function is as follows. The RecF protein is involved in DNA metabolism; it is required for DNA replication and normal SOS inducibility. RecF binds preferentially to single-stranded, linear DNA. It also seems to bind ATP. The sequence is that of DNA replication and repair protein RecF from Mycobacterium sp. (strain JLS).